We begin with the raw amino-acid sequence, 965 residues long: Translation initiation factor IF-2 (965 aa).

The disordered stretch occupies residues 94–375; sequence RTFVRRDEAA…RGKHQESTTF (282 aa). The segment covering 104–115 has biased composition (low complexity); it reads EQAAEATGNGQE. Basic and acidic residues predominate over residues 121-177; sequence ELQRREEEARHEAELLEKQAQELKARQEQLAREEAERQAREQAAEAERRRAEEEAAK. Positions 181-191 are enriched in low complexity; it reads AAVAEAAAAAR. Positions 192–253 are enriched in basic and acidic residues; that stretch reads EQAEQERASQ…KAEAEARAIR (62 aa). Pro residues predominate over residues 267–276; that stretch reads PEPPPKPAEA. Low complexity predominate over residues 303 to 320; sequence KKPAPAAAAQPAATTQPA. Residues 351 to 364 show a composition bias toward gly residues; that stretch reads TSGGVDRGWRGGPK. The tr-type G domain occupies 465 to 634; it reads PRPPVVTVMG…LLQAEVLELK (170 aa). The G1 stretch occupies residues 474–481; it reads GHVDHGKT. 474 to 481 is a GTP binding site; sequence GHVDHGKT. Residues 499–503 are G2; it reads GITQH. The interval 520–523 is G3; the sequence is DTPG. GTP contacts are provided by residues 520–524 and 574–577; these read DTPGH and NKID. Residues 574 to 577 form a G4 region; sequence NKID. The segment at 610–612 is G5; the sequence is SAK.

This sequence belongs to the TRAFAC class translation factor GTPase superfamily. Classic translation factor GTPase family. IF-2 subfamily.

It localises to the cytoplasm. In terms of biological role, one of the essential components for the initiation of protein synthesis. Protects formylmethionyl-tRNA from spontaneous hydrolysis and promotes its binding to the 30S ribosomal subunits. Also involved in the hydrolysis of GTP during the formation of the 70S ribosomal complex. The polypeptide is Translation initiation factor IF-2 (Paraburkholderia phymatum (strain DSM 17167 / CIP 108236 / LMG 21445 / STM815) (Burkholderia phymatum)).